The sequence spans 385 residues: Protein pelota homolog (385 aa).

A Glycyl lysine isopeptide (Lys-Gly) (interchain with G-Cter in SUMO2) cross-link involves residue Lys162. Phosphoserine is present on residues Ser374, Ser380, Ser381, and Ser382.

The protein belongs to the eukaryotic release factor 1 family. Pelota subfamily. Component of the Pelota-HBS1L complex, also named Dom34-Hbs1 complex, composed of PELO and HBS1L. Interacts with PINK1. Interacts with ABCE1. Interacts with CNOT4. A divalent metal cation serves as cofactor.

Its subcellular location is the cytoplasm. In terms of biological role, component of the Pelota-HBS1L complex, a complex that recognizes stalled ribosomes and triggers the No-Go Decay (NGD) pathway. In the Pelota-HBS1L complex, PELO recognizes ribosomes stalled at the 3' end of an mRNA and engages stalled ribosomes by destabilizing mRNA in the mRNA channel. Following mRNA extraction from stalled ribosomes by the SKI complex, the Pelota-HBS1L complex promotes recruitment of ABCE1, which drives the disassembly of stalled ribosomes, followed by degradation of damaged mRNAs as part of the NGD pathway. As part of the PINK1-regulated signaling, upon mitochondrial damage is recruited to the ribosome/mRNA-ribonucleoprotein complex associated to mitochondrial outer membrane thereby enabling the recruitment of autophagy receptors and induction of mitophagy. This Rattus norvegicus (Rat) protein is Protein pelota homolog (Pelo).